The primary structure comprises 114 residues: Early 4 ORF4 protein (114 aa).

The Nuclear localization signal motif lies at 66 to 75 (RAKRRDRRRR).

The protein belongs to the adenoviridae E4 ORF4 family. In terms of assembly, interacts with host BAZ1A/ACF1, host PPP2R2A/PP2a-B55alpha subunit, and host PPP2R5E/PP2a-B'B56 subunit. May interact with host SRC. May be phosphorylated by host SRC kinase.

The protein localises to the host nucleus. The protein resides in the host cytoplasm. Functionally, plays a role in viral alternative pre-mRNA splicing. Activates dephosphorylation by protein phosphatase 2A of host SR proteins and converts their splicing properties. When expressed alone ex vivo, induces p53/TP53-independent apoptosis called cytoplasmic death. May mimic nutrient/growth signals to activate the host mTOR pathway. This chain is Early 4 ORF4 protein, found in Homo sapiens (Human).